Here is a 374-residue protein sequence, read N- to C-terminus: Chaperone protein DnaJ (374 aa).

A J domain is found at 5-70 (DYYEILEIER…GKRQLYDRYG (66 aa)). The segment at 136–213 (GCKKEIKIRY…CNGKGHENKE (78 aa)) adopts a CR-type zinc-finger fold. The Zn(2+) site is built by Cys149, Cys152, Cys165, Cys168, Cys187, Cys190, Cys201, and Cys204. 4 CXXCXGXG motif repeats span residues 149 to 156 (CPDCKGTG), 165 to 172 (CPDCGGRG), 187 to 194 (CPKCGGSG), and 201 to 208 (CPKCNGKG).

This sequence belongs to the DnaJ family. As to quaternary structure, homodimer. Zn(2+) serves as cofactor.

It is found in the cytoplasm. Its function is as follows. Participates actively in the response to hyperosmotic and heat shock by preventing the aggregation of stress-denatured proteins and by disaggregating proteins, also in an autonomous, DnaK-independent fashion. Unfolded proteins bind initially to DnaJ; upon interaction with the DnaJ-bound protein, DnaK hydrolyzes its bound ATP, resulting in the formation of a stable complex. GrpE releases ADP from DnaK; ATP binding to DnaK triggers the release of the substrate protein, thus completing the reaction cycle. Several rounds of ATP-dependent interactions between DnaJ, DnaK and GrpE are required for fully efficient folding. Also involved, together with DnaK and GrpE, in the DNA replication of plasmids through activation of initiation proteins. This Wolinella succinogenes (strain ATCC 29543 / DSM 1740 / CCUG 13145 / JCM 31913 / LMG 7466 / NCTC 11488 / FDC 602W) (Vibrio succinogenes) protein is Chaperone protein DnaJ.